Here is a 206-residue protein sequence, read N- to C-terminus: MELKLLQDNGQLGAGVAASPEVFGRDYNEALVHQVVVAYQANARSGNRKQKDREEVKHTTKKPWRQKGTGRARAGMSSSPLWRGGGRIFPNSPEENFSQKVNKKMYRAGMRSIYSQLAREGRINVVDSLSVDAPKTKLLADKFRAMGLDSVLVITDNLDENLFLASRNLAHVLVVEPRHADPLSLVHYKKVLVTKAAVAQIEELLK.

A disordered region spans residues 43–78 (ARSGNRKQKDREEVKHTTKKPWRQKGTGRARAGMSS). Residues 49–58 (KQKDREEVKH) are compositionally biased toward basic and acidic residues. Positions 59-70 (TTKKPWRQKGTG) are enriched in basic residues.

This sequence belongs to the universal ribosomal protein uL4 family. In terms of assembly, part of the 50S ribosomal subunit.

Functionally, one of the primary rRNA binding proteins, this protein initially binds near the 5'-end of the 23S rRNA. It is important during the early stages of 50S assembly. It makes multiple contacts with different domains of the 23S rRNA in the assembled 50S subunit and ribosome. Forms part of the polypeptide exit tunnel. This Ralstonia pickettii (strain 12J) protein is Large ribosomal subunit protein uL4.